The chain runs to 380 residues: MRILADENIPLVDAFFADQGSIRRLPGRAIDRAALAEVDVLLVRSVTEVSRAALAGSPVRFVGTCTIGTDHLDLDYFAEAGIAWSSAPGCNARGVVDYVLGCLLAMAEVRGADLAERTYGVVGAGQVGGRLVEVLRGLGWKVLVCDPPRQAREPDGEFVSLERLLAEADVISLHTPLNRDGEHPTRHLLDEPRLAALRPGTWLVNASRGAVVDNQALRRLLEGGADLEVALDVWEGEPQADPELAARCLIATPHIAGYSLEGKLRGTAQIYQAYCAWRGIAERVSLQDVLPETWLAGLQLNPGCDPAWALATLCRAVYDPRSDDAAFRRSLTGDSATRRAAFDALRKHYPPRREITGLRVATGGQAELQRVVRALGAQLV.

Residues Ser45 and Thr66 each coordinate substrate. NAD(+)-binding positions include 126-127 (QV), Asp146, Thr175, 206-208 (ASR), and Asp232. The active site involves Arg208. Glu237 is a catalytic residue. His254 serves as the catalytic Proton donor. Position 257 (Gly257) interacts with NAD(+). Tyr258 serves as a coordination point for substrate.

Belongs to the D-isomer specific 2-hydroxyacid dehydrogenase family. PdxB subfamily. In terms of assembly, homodimer.

The protein resides in the cytoplasm. The catalysed reaction is 4-phospho-D-erythronate + NAD(+) = (R)-3-hydroxy-2-oxo-4-phosphooxybutanoate + NADH + H(+). The protein operates within cofactor biosynthesis; pyridoxine 5'-phosphate biosynthesis; pyridoxine 5'-phosphate from D-erythrose 4-phosphate: step 2/5. In terms of biological role, catalyzes the oxidation of erythronate-4-phosphate to 3-hydroxy-2-oxo-4-phosphonooxybutanoate. This chain is Erythronate-4-phosphate dehydrogenase, found in Pseudomonas paraeruginosa (strain DSM 24068 / PA7) (Pseudomonas aeruginosa (strain PA7)).